A 267-amino-acid polypeptide reads, in one-letter code: Hydrolase FUB4 (267 aa).

Catalysis depends on charge relay system residues S93, D183, and H243.

Belongs to the AB hydrolase 3 family.

Its pathway is mycotoxin biosynthesis. In terms of biological role, hydrolase; part of the gene cluster that mediates the biosynthesis of fusaric acid, a mycotoxin with low to moderate toxicity to animals and humans, but with high phytotoxic properties. L-aspartate is suggested as fusaric acid amino acid precursor that is activated and further processed to O-acetyl-L-homoserine by cluster enzymes aspartate kinase FUB3 and homoserine O-acetyltransferase FUB5, as well as enzymes of the primary metabolism. The polyketide synthase (PKS) FUB1 generates the triketide trans-2-hexenal which is presumptively released by the hydrolase FUB4 and linked to the NRPS-bound amino acid precursor by NAD(P)-dependent dehydrogenase FUB6. FUB1, FUB4, and the non-canonical NRPS Fub8 may form an enzyme complex. Further processing of the NRPS-bound intermediate might be carried out by FUB6 and the sulfhydrylase FUB7, enabling a spontaneous electrocyclization to close the carbon backbone of fusaric acid. Dihydrofusaric acid is likely to be released via reduction by the thioester reductase (TR) domain of FUB8 whereupon the final oxidation to fusaric acid may (also) be performed by the FMN-dependent dehydrogenase FUB9. In Fusarium oxysporum f. sp. lycopersici (strain 4287 / CBS 123668 / FGSC 9935 / NRRL 34936) (Fusarium vascular wilt of tomato), this protein is Hydrolase FUB4.